The sequence spans 417 residues: Imidazolonepropionase (417 aa).

Residues His-77 and His-79 each coordinate Fe(3+). The Zn(2+) site is built by His-77 and His-79. Residues Arg-86, Tyr-149, and His-182 each coordinate 4-imidazolone-5-propanoate. Tyr-149 is a binding site for N-formimidoyl-L-glutamate. His-247 is a binding site for Fe(3+). Residue His-247 coordinates Zn(2+). Gln-250 lines the 4-imidazolone-5-propanoate pocket. Residue Asp-322 coordinates Fe(3+). Residue Asp-322 participates in Zn(2+) binding. Positions 324 and 326 each coordinate N-formimidoyl-L-glutamate. Thr-327 lines the 4-imidazolone-5-propanoate pocket.

The protein belongs to the metallo-dependent hydrolases superfamily. HutI family. Requires Zn(2+) as cofactor. Fe(3+) serves as cofactor.

The protein localises to the cytoplasm. It carries out the reaction 4-imidazolone-5-propanoate + H2O = N-formimidoyl-L-glutamate. The protein operates within amino-acid degradation; L-histidine degradation into L-glutamate; N-formimidoyl-L-glutamate from L-histidine: step 3/3. Functionally, catalyzes the hydrolytic cleavage of the carbon-nitrogen bond in imidazolone-5-propanoate to yield N-formimidoyl-L-glutamate. It is the third step in the universal histidine degradation pathway. In Cupriavidus necator (strain ATCC 17699 / DSM 428 / KCTC 22496 / NCIMB 10442 / H16 / Stanier 337) (Ralstonia eutropha), this protein is Imidazolonepropionase.